A 224-amino-acid chain; its full sequence is dTDP-fucosamine acetyltransferase (224 aa).

The N-acetyltransferase domain maps to 94 to 224 (PALRQLASAA…VESTAYWLYR (131 aa)). Acetyl-CoA is bound by residues 168–174 (LAGRGAG), N201, and R207. Y208 serves as the catalytic Proton donor.

It belongs to the WecD family. Homodimer.

The catalysed reaction is dTDP-4-amino-4,6-dideoxy-alpha-D-galactose + acetyl-CoA = dTDP-4-acetamido-4,6-dideoxy-alpha-D-galactose + CoA + H(+). Its pathway is bacterial outer membrane biogenesis; enterobacterial common antigen biosynthesis. In terms of biological role, catalyzes the acetylation of dTDP-fucosamine (dTDP-4-amino-4,6-dideoxy-D-galactose) to dTDP-Fuc4NAc, which is utilized in the biosynthesis of the enterobacterial common antigen (ECA). This Escherichia coli O6:H1 (strain CFT073 / ATCC 700928 / UPEC) protein is dTDP-fucosamine acetyltransferase.